We begin with the raw amino-acid sequence, 145 residues long: D-aminoacyl-tRNA deacylase (145 aa).

A Gly-cisPro motif, important for rejection of L-amino acids motif is present at residues 137 to 138 (GP).

The protein belongs to the DTD family. Homodimer.

The protein localises to the cytoplasm. It catalyses the reaction glycyl-tRNA(Ala) + H2O = tRNA(Ala) + glycine + H(+). The enzyme catalyses a D-aminoacyl-tRNA + H2O = a tRNA + a D-alpha-amino acid + H(+). An aminoacyl-tRNA editing enzyme that deacylates mischarged D-aminoacyl-tRNAs. Also deacylates mischarged glycyl-tRNA(Ala), protecting cells against glycine mischarging by AlaRS. Acts via tRNA-based rather than protein-based catalysis; rejects L-amino acids rather than detecting D-amino acids in the active site. By recycling D-aminoacyl-tRNA to D-amino acids and free tRNA molecules, this enzyme counteracts the toxicity associated with the formation of D-aminoacyl-tRNA entities in vivo and helps enforce protein L-homochirality. The sequence is that of D-aminoacyl-tRNA deacylase from Teredinibacter turnerae (strain ATCC 39867 / T7901).